Consider the following 153-residue polypeptide: Insulin-like growth factor 1 (153 aa).

Residues 49–77 (GPETLCGAELVDALQFVCGPRGFYFNKPT) form a b region. 3 cysteine pairs are disulfide-bonded: cysteine 54/cysteine 96, cysteine 66/cysteine 109, and cysteine 95/cysteine 100. Positions 78 to 89 (GYGSSIRRAPQT) are c. Positions 90–110 (GIVDECCFRSCDLRRLEMYCA) are a. Residues 111 to 118 (PLKPTKAA) form a d region. Residues 119–153 (RSIRAQRHTDMPKTQKEVHLKNTSRGSAGNKTYRM) constitute a propeptide, e peptide. Residues 120–153 (SIRAQRHTDMPKTQKEVHLKNTSRGSAGNKTYRM) are disordered. Residues 125 to 138 (RHTDMPKTQKEVHL) are compositionally biased toward basic and acidic residues. Residues 139–153 (KNTSRGSAGNKTYRM) are compositionally biased toward polar residues.

It belongs to the insulin family. As to quaternary structure, forms a ternary complex with IGFR1 and ITGAV:ITGB3. Forms a ternary complex with IGFR1 and ITGA6:ITGB4. Interacts with SH2D3C isoform 2. Forms a ternary complex with IGFBP3 and ALS.

Its subcellular location is the secreted. Its function is as follows. The insulin-like growth factors, isolated from plasma, are structurally and functionally related to insulin but have a much higher growth-promoting activity. May be a physiological regulator of [1-14C]-2-deoxy-D-glucose (2DG) transport and glycogen synthesis in osteoblasts. Stimulates glucose transport in bone-derived osteoblastic (PyMS) cells and is effective at much lower concentrations than insulin, not only regarding glycogen and DNA synthesis but also with regard to enhancing glucose uptake. May play a role in synapse maturation. Ca(2+)-dependent exocytosis of IGF1 is required for sensory perception of smell in the olfactory bulb. Acts as a ligand for IGF1R. Binds to the alpha subunit of IGF1R, leading to the activation of the intrinsic tyrosine kinase activity which autophosphorylates tyrosine residues in the beta subunit thus initiating a cascade of down-stream signaling events leading to activation of the PI3K-AKT/PKB and the Ras-MAPK pathways. Binds to integrins ITGAV:ITGB3 and ITGA6:ITGB4. Its binding to integrins and subsequent ternary complex formation with integrins and IGFR1 are essential for IGF1 signaling. Induces the phosphorylation and activation of IGFR1, MAPK3/ERK1, MAPK1/ERK2 and AKT1. As part of the MAPK/ERK signaling pathway, acts as a negative regulator of apoptosis in cardiomyocytes via promotion of STUB1/CHIP-mediated ubiquitination and degradation of ICER-type isoforms of CREM. The protein is Insulin-like growth factor 1 of Mus musculus (Mouse).